Reading from the N-terminus, the 141-residue chain is Large ribosomal subunit protein uL11 (141 aa).

Belongs to the universal ribosomal protein uL11 family. In terms of assembly, part of the ribosomal stalk of the 50S ribosomal subunit. Interacts with L10 and the large rRNA to form the base of the stalk. L10 forms an elongated spine to which L12 dimers bind in a sequential fashion forming a multimeric L10(L12)X complex. One or more lysine residues are methylated.

Forms part of the ribosomal stalk which helps the ribosome interact with GTP-bound translation factors. The sequence is that of Large ribosomal subunit protein uL11 from Maridesulfovibrio salexigens (strain ATCC 14822 / DSM 2638 / NCIMB 8403 / VKM B-1763) (Desulfovibrio salexigens).